The primary structure comprises 1382 residues: DNA-directed RNA polymerase subunit beta' (1382 aa).

Zn(2+) contacts are provided by C70, C72, C85, and C88. Residues D460, D462, and D464 each coordinate Mg(2+). 4 residues coordinate Zn(2+): C808, C882, C889, and C892.

The protein belongs to the RNA polymerase beta' chain family. In terms of assembly, the RNAP catalytic core consists of 2 alpha, 1 beta, 1 beta' and 1 omega subunit. When a sigma factor is associated with the core the holoenzyme is formed, which can initiate transcription. Requires Mg(2+) as cofactor. Zn(2+) serves as cofactor.

It catalyses the reaction RNA(n) + a ribonucleoside 5'-triphosphate = RNA(n+1) + diphosphate. Its function is as follows. DNA-dependent RNA polymerase catalyzes the transcription of DNA into RNA using the four ribonucleoside triphosphates as substrates. The chain is DNA-directed RNA polymerase subunit beta' from Geobacter sp. (strain M21).